The following is a 72-amino-acid chain: ATP synthase subunit c (72 aa).

2 helical membrane-spanning segments follow: residues 4–24 (ALGAGLAVSIAGIGGGIGMGI) and 46–66 (LLFITLAFIETLTIYGLLIAF).

The protein belongs to the ATPase C chain family. As to quaternary structure, F-type ATPases have 2 components, F(1) - the catalytic core - and F(0) - the membrane proton channel. F(1) has five subunits: alpha(3), beta(3), gamma(1), delta(1), epsilon(1). F(0) has three main subunits: a(1), b(2) and c(10-14). The alpha and beta chains form an alternating ring which encloses part of the gamma chain. F(1) is attached to F(0) by a central stalk formed by the gamma and epsilon chains, while a peripheral stalk is formed by the delta and b chains.

The protein resides in the cell membrane. Functionally, f(1)F(0) ATP synthase produces ATP from ADP in the presence of a proton or sodium gradient. F-type ATPases consist of two structural domains, F(1) containing the extramembraneous catalytic core and F(0) containing the membrane proton channel, linked together by a central stalk and a peripheral stalk. During catalysis, ATP synthesis in the catalytic domain of F(1) is coupled via a rotary mechanism of the central stalk subunits to proton translocation. Key component of the F(0) channel; it plays a direct role in translocation across the membrane. A homomeric c-ring of between 10-14 subunits forms the central stalk rotor element with the F(1) delta and epsilon subunits. This Syntrophomonas wolfei subsp. wolfei (strain DSM 2245B / Goettingen) protein is ATP synthase subunit c.